A 507-amino-acid chain; its full sequence is MNEHMDHFYTKRKQAEEGGGREKLAQQRQKGKLTARERIIFLLDQDSFIELHPFMESQVLTREQRMLGDGVVTGYGTIDGRSVYVFAQDFTVYGGALGETHARKICALMDLAAKNKAPIIGLNDSGGARIQEGVLSLDGYGHIFYRNVLYSGVIPQISVILGPCAGGAVYSPALTDFIFMAEQTGRMFITGPKVIEKVTGEQVDAESLGGAGIHNAVSGNAHFSGHTEKEVLTGVRKLLSYLPLNGRTTEPKPEKEASRPLLNRLVPADTTKPYDVRKVIRELADPQSFFEIQPFFAKNIVIGFARLGEKAIGIVASQPKHLAGSLTIDAADKAARFIRFCDAFDIPLLTVEDVPGFLPGIQQEHNGIIRHGAKLLFAYAEATVPKVTLIIRKAYGGAYVAMNSKAIGADLVFAWPNAEIAVMGPEGAASILYEKEIKASADPQKTKREKTAEYKKQNAGPYKAAACGMVDDIILPEESRGRLIQAFHMLTHKTEERPKKKHGNIPL.

Residues 1 to 25 (MNEHMDHFYTKRKQAEEGGGREKLA) show a composition bias toward basic and acidic residues. The segment at 1 to 30 (MNEHMDHFYTKRKQAEEGGGREKLAQQRQK) is disordered. The CoA carboxyltransferase N-terminal domain occupies 1 to 254 (MNEHMDHFYT…NGRTTEPKPE (254 aa)). The segment at 1 to 501 (MNEHMDHFYT…HKTEERPKKK (501 aa)) is carboxyltransferase. Positions 256-501 (EASRPLLNRL…HKTEERPKKK (246 aa)) constitute a CoA carboxyltransferase C-terminal domain.

It belongs to the AccD/PCCB family. Probably a dodecamer composed of six biotin-containing alpha subunits and six beta subunits.

The enzyme catalyses propanoyl-CoA + hydrogencarbonate + ATP = (S)-methylmalonyl-CoA + ADP + phosphate + H(+). It participates in metabolic intermediate metabolism; propanoyl-CoA degradation; succinyl-CoA from propanoyl-CoA: step 1/3. The polypeptide is Putative propionyl-CoA carboxylase beta chain (yqjD) (Bacillus subtilis (strain 168)).